The primary structure comprises 296 residues: N-acetylmuramic acid 6-phosphate etherase 2 (296 aa).

One can recognise an SIS domain in the interval 55–218 (IIKSFNQGGR…STISMIGIGK (164 aa)). E83 serves as the catalytic Proton donor. E114 is an active-site residue.

It belongs to the GCKR-like family. MurNAc-6-P etherase subfamily. Homodimer.

The catalysed reaction is N-acetyl-D-muramate 6-phosphate + H2O = N-acetyl-D-glucosamine 6-phosphate + (R)-lactate. It functions in the pathway amino-sugar metabolism; N-acetylmuramate degradation. Functionally, specifically catalyzes the cleavage of the D-lactyl ether substituent of MurNAc 6-phosphate, producing GlcNAc 6-phosphate and D-lactate. This chain is N-acetylmuramic acid 6-phosphate etherase 2, found in Enterococcus faecalis (strain ATCC 700802 / V583).